The sequence spans 306 residues: Nucleotide-binding protein MUL_1815 (306 aa).

29-36 (GLSGAGRG) contributes to the ATP binding site. 80–83 (DVRS) is a binding site for GTP.

Belongs to the RapZ-like family.

In terms of biological role, displays ATPase and GTPase activities. This Mycobacterium ulcerans (strain Agy99) protein is Nucleotide-binding protein MUL_1815.